The sequence spans 211 residues: tRNA (pseudouridine(54)-N(1))-methyltransferase (211 aa).

3 residues coordinate S-adenosyl-L-methionine: Leu128, Gly150, and Cys183.

This sequence belongs to the methyltransferase superfamily. TrmY family. Homodimer.

It is found in the cytoplasm. It catalyses the reaction pseudouridine(54) in tRNA + S-adenosyl-L-methionine = N(1)-methylpseudouridine(54) in tRNA + S-adenosyl-L-homocysteine + H(+). In terms of biological role, specifically catalyzes the N1-methylation of pseudouridine at position 54 (Psi54) in tRNAs. This chain is tRNA (pseudouridine(54)-N(1))-methyltransferase, found in Methanosarcina acetivorans (strain ATCC 35395 / DSM 2834 / JCM 12185 / C2A).